Consider the following 93-residue polypeptide: MHDYIKERTIKIGKYIVETKKTVRVIAKEFGVSKSTVHKDLTERLPEINPDLANEVKEILDYHKSIRHLRGGEATKLKYKKDEILEGEPVQQS.

Residues 4–75 (YIKERTIKIG…IRHLRGGEAT (72 aa)) form the HTH deoR-type domain. The segment at residues 21–40 (KTVRVIAKEFGVSKSTVHKD) is a DNA-binding region (H-T-H motif).

In terms of biological role, this protein regulates the transcription of sigK, which encodes mother cell chamber RNA polymerase sigma-factor (sigma K). This is Stage III sporulation protein D (spoIIID) from Bacillus subtilis (strain 168).